The sequence spans 415 residues: uncharacterized protein (415 aa).

This is an uncharacterized protein from Rickettsia prowazekii (strain Madrid E).